The primary structure comprises 91 residues: uncharacterized protein (91 aa).

The N-terminal stretch at 1–18 (MKVNLILFSLFLLVSIMA) is a signal peptide. C19 carries the N-palmitoyl cysteine lipid modification. The S-diacylglycerol cysteine moiety is linked to residue C19.

The protein resides in the cell membrane. This is an uncharacterized protein from Escherichia coli (strain K12).